Consider the following 463-residue polypeptide: L-seryl-tRNA(Sec) selenium transferase (463 aa).

An N6-(pyridoxal phosphate)lysine modification is found at Lys-295.

Belongs to the SelA family. As to quaternary structure, homodecamer; pentamer of dimers. Binds only one seryl-tRNA(Sec) per dimer. It depends on pyridoxal 5'-phosphate as a cofactor.

The protein localises to the cytoplasm. It catalyses the reaction L-seryl-tRNA(Sec) + selenophosphate + H(+) = L-selenocysteinyl-tRNA(Sec) + phosphate. It participates in aminoacyl-tRNA biosynthesis; selenocysteinyl-tRNA(Sec) biosynthesis; selenocysteinyl-tRNA(Sec) from L-seryl-tRNA(Sec) (bacterial route): step 1/1. Its function is as follows. Converts seryl-tRNA(Sec) to selenocysteinyl-tRNA(Sec) required for selenoprotein biosynthesis. This chain is L-seryl-tRNA(Sec) selenium transferase, found in Shigella dysenteriae serotype 1 (strain Sd197).